A 595-amino-acid chain; its full sequence is Elongation factor 4 (595 aa).

One can recognise a tr-type G domain in the interval 2-183 (KNIRNFCIIA…TIVEKVPAPK (182 aa)). Residues 14-19 (DHGKST) and 130-133 (NKID) each bind GTP.

Belongs to the TRAFAC class translation factor GTPase superfamily. Classic translation factor GTPase family. LepA subfamily.

The protein resides in the cell inner membrane. The catalysed reaction is GTP + H2O = GDP + phosphate + H(+). In terms of biological role, required for accurate and efficient protein synthesis under certain stress conditions. May act as a fidelity factor of the translation reaction, by catalyzing a one-codon backward translocation of tRNAs on improperly translocated ribosomes. Back-translocation proceeds from a post-translocation (POST) complex to a pre-translocation (PRE) complex, thus giving elongation factor G a second chance to translocate the tRNAs correctly. Binds to ribosomes in a GTP-dependent manner. This chain is Elongation factor 4, found in Parabacteroides distasonis (strain ATCC 8503 / DSM 20701 / CIP 104284 / JCM 5825 / NCTC 11152).